Consider the following 394-residue polypeptide: Elongation factor Tu 2 (394 aa).

A tr-type G domain is found at 10-204 (KPHVNVGTIG…ALDSYIPEPE (195 aa)). The segment at 19–26 (GHVDHGKT) is G1. 19 to 26 (GHVDHGKT) lines the GTP pocket. Mg(2+) is bound at residue T26. Positions 60-64 (GITIS) are G2. The tract at residues 81–84 (DCPG) is G3. GTP is bound by residues 81 to 85 (DCPGH) and 136 to 139 (NKCD). The tract at residues 136–139 (NKCD) is G4. Residues 174-176 (SAL) are G5.

This sequence belongs to the TRAFAC class translation factor GTPase superfamily. Classic translation factor GTPase family. EF-Tu/EF-1A subfamily. As to quaternary structure, monomer.

The protein resides in the cytoplasm. The catalysed reaction is GTP + H2O = GDP + phosphate + H(+). In terms of biological role, GTP hydrolase that promotes the GTP-dependent binding of aminoacyl-tRNA to the A-site of ribosomes during protein biosynthesis. This Pseudoalteromonas translucida (strain TAC 125) protein is Elongation factor Tu 2.